The chain runs to 447 residues: Na(+)-translocating NADH-quinone reductase subunit A (447 aa).

It belongs to the NqrA family. In terms of assembly, composed of six subunits; NqrA, NqrB, NqrC, NqrD, NqrE and NqrF.

The enzyme catalyses a ubiquinone + n Na(+)(in) + NADH + H(+) = a ubiquinol + n Na(+)(out) + NAD(+). NQR complex catalyzes the reduction of ubiquinone-1 to ubiquinol by two successive reactions, coupled with the transport of Na(+) ions from the cytoplasm to the periplasm. NqrA to NqrE are probably involved in the second step, the conversion of ubisemiquinone to ubiquinol. This Haemophilus influenzae (strain ATCC 51907 / DSM 11121 / KW20 / Rd) protein is Na(+)-translocating NADH-quinone reductase subunit A.